We begin with the raw amino-acid sequence, 361 residues long: MVSLREIRAHNAGLRDAWAGHRHVSLFVGATKGIGLATIMELIQRIDEPTVYIVCRSTAQFAQRIAELQRLNRRAKLVALYGQISLLSEVDRICNLVLRKESQLDLLFMSPGYLPNGHPSYTPEGLEELASLAYYCRLRFTVNLLPLLERTAKTNYPDEPSNRRPRVFSVLNGGNERALPFVPEDLQSEKSYTMLNHVAHTTLMNTLALEHLAHKKPSVDFVHESPGKVQTDIVASFLQSPERTRSRLVLWRWLKGMLMLVLQAVLLPVFYVVAMPLAESGERRLYEATVDLSQQWQKQLQSPPYNGIVAAPGFYRMKHTSDIVMDDTVLQAYRALGMPERAWEHTMAVFRSVLDKGSGKK.

A helical transmembrane segment spans residues 257–277 (MLMLVLQAVLLPVFYVVAMPL).

Belongs to the NmrA-type oxidoreductase family.

It is found in the membrane. Oxidoreductase; part of the gene cluster 23 that mediates the biosynthesis of a family of 2-pyridones known as leporins. The hybrid PKS-NRPS synthetase lepA and the enoyl reductase lepG are responsible for fusion of phenylalanine with a hexaketide and subsequent release of the stable tetramic acid precursor, pre-leporin C. Because lepA lacks a designated enoylreductase (ER) domain, the required activity is provided the enoyl reductase lepG. It is possible that the dehydrogenase lepF also participates in production of pre-leporin C. Cytochrome P450 monooxygenase lepH is then required for the ring expansion step to yield leporin C. Leporin C is then presumably further oxidized by the N-hydroxylase lepD to form leporin B. LepI may possess a function in biosynthesis upstream of lepA. Leporin B is further oxidized in the presence of ferric ion to give the leporin B trimer-iron chelate, but whether or not this reaction is catalyzed by an enzyme in the pathway or by ferric ion is not determined yet. The protein is Oxidoreductase lepF of Aspergillus flavus (strain ATCC 200026 / FGSC A1120 / IAM 13836 / NRRL 3357 / JCM 12722 / SRRC 167).